Here is a 79-residue protein sequence, read N- to C-terminus: Sec-independent protein translocase protein TatA (79 aa).

The chain crosses the membrane as a helical span at residues 1 to 21 (MGSLSIWHWLIVLLIVALVFG). The segment at 46–79 (ADAPAAEAQQRELPRNGAVDVEAKEKTPRSGDYR) is disordered. The segment covering 66 to 79 (VEAKEKTPRSGDYR) has biased composition (basic and acidic residues).

It belongs to the TatA/E family. In terms of assembly, the Tat system comprises two distinct complexes: a TatABC complex, containing multiple copies of TatA, TatB and TatC subunits, and a separate TatA complex, containing only TatA subunits. Substrates initially bind to the TatABC complex, which probably triggers association of the separate TatA complex to form the active translocon.

The protein localises to the cell inner membrane. In terms of biological role, part of the twin-arginine translocation (Tat) system that transports large folded proteins containing a characteristic twin-arginine motif in their signal peptide across membranes. TatA could form the protein-conducting channel of the Tat system. This is Sec-independent protein translocase protein TatA from Paraburkholderia phytofirmans (strain DSM 17436 / LMG 22146 / PsJN) (Burkholderia phytofirmans).